Consider the following 363-residue polypeptide: Mitochondrial phosphate carrier protein 2, mitochondrial (363 aa).

A helical transmembrane segment spans residues 65–85 (AYFAACTVAGMLSCGITHTAI). 3 Solcar repeats span residues 65-149 (AYFA…AKKY), 162-246 (YKTL…TVEL), and 263-342 (VQLG…VKVL). The Mitochondrial matrix portion of the chain corresponds to 86–123 (TPLDVIKCNMQIDPLKYKNITSAFKTTIKEQGLKGFTR). A helical membrane pass occupies residues 124 to 143 (GWSPTLLGYSAQGAFKYGLY). Residues 144-164 (EYAKKYYSDIVGPEYAAKYKT) are Mitochondrial intermembrane-facing. The chain crosses the membrane as a helical span at residues 165–185 (LIYLAGSASAEIVADVALCPM). Topologically, residues 186–220 (EAVKVRVQTQPGFARGLSDGLPKIIKSEGFRGLHK) are mitochondrial matrix. The chain crosses the membrane as a helical span at residues 221 to 240 (GLVPLWGRQIPYTMMKFATF). The Mitochondrial intermembrane segment spans residues 241–261 (ENTVELIYKKVMPTPKEECSK). Residues 262–282 (PVQLGVSFAGGYIAGIFCAII) traverse the membrane as a helical segment. The Mitochondrial matrix segment spans residues 283–321 (SHPADNLVSFLNNSKGATVADAVKRLGLWGMLTRGLPLR). A helical transmembrane segment spans residues 322–342 (IFMIGTLTGAQWVIYDAVKVL). The Mitochondrial intermembrane segment spans residues 343 to 363 (AGLPTTGGASPATALAPSVSA).

Belongs to the mitochondrial carrier (TC 2.A.29) family. In terms of tissue distribution, expressed in leaves. Strong expression in senescent leaves.

It localises to the mitochondrion inner membrane. Its function is as follows. Transport of phosphate groups from the cytosol to the mitochondrial matrix. Mediates salt stress tolerance through an ATP-dependent pathway and via modulation of the gibberellin metabolism. This Arabidopsis thaliana (Mouse-ear cress) protein is Mitochondrial phosphate carrier protein 2, mitochondrial (MPT2).